The sequence spans 351 residues: MVLSIRSQIIIGVVSSILLTSTILAIAYILMWFNGHMTLTLTLTTIITSCLTLLICSIFINPLIQKIKQFNIKTKQFANGNYASNDKTFNSPKEIYELNQSFNKMASEITQQMNQIKSEQQEKTELIQNLAHDLKTPLASIISYSEGLRDGIITKDHEIKESYDILIKQANRLSTLFDDMTHIITLNTGKTYPPELIQLDQLLVSILQPYEQRIKHENRTLEVNFCSEIDAFYQYRTPLERILTNLLDNALKFSNVGSRIDINISENKDQDTIDIAISDEGIGIIPELQERIFERTFRVENSRNTKTGGSGLGLYIANELAQQNNAKISVSSDIDVGTTMTVTLHKLDITS.

2 helical membrane-spanning segments follow: residues 9–29 (IIIG…IAYI) and 40–60 (TLTL…SIFI). Residues 61 to 114 (NPLIQKIKQFNIKTKQFANGNYASNDKTFNSPKEIYELNQSFNKMASEITQQMN) enclose the HAMP domain. The Histidine kinase domain maps to 129-348 (NLAHDLKTPL…TMTVTLHKLD (220 aa)). His-132 is modified (phosphohistidine; by autocatalysis).

In terms of processing, autophosphorylated.

Its subcellular location is the cell membrane. The enzyme catalyses ATP + protein L-histidine = ADP + protein N-phospho-L-histidine.. Its function is as follows. Member of the two-component regulatory system SaeR/SaeS involved in the regulation of staphylococcal virulence factors in a strain-dependent fashion. Probably functions as a membrane-associated protein kinase that upon sensing the appropriate signal, autophosphorylates and in turn activates the cytosolic response regulator SaeR. This is Histidine protein kinase SaeS (saeS) from Staphylococcus aureus (strain bovine RF122 / ET3-1).